A 476-amino-acid chain; its full sequence is Cytosolic iron-sulfur assembly component 3 (476 aa).

Ala-2 carries the post-translational modification N-acetylalanine. [4Fe-4S] cluster-binding residues include Cys-24, Cys-71, Cys-74, Cys-77, Cys-190, Cys-246, Cys-395, and Cys-399.

This sequence belongs to the NARF family. In terms of assembly, external component of the CIA complex. In the CIA complex, interacts directly with CIAO1 and MMS19.

Component of the cytosolic iron-sulfur protein assembly (CIA) complex, a multiprotein complex that mediates the incorporation of iron-sulfur cluster into extramitochondrial Fe/S proteins. Seems to negatively regulate the level of HIF1A expression, although this effect could be indirect. This chain is Cytosolic iron-sulfur assembly component 3, found in Bos taurus (Bovine).